The primary structure comprises 529 residues: Tyrosinase (529 aa).

The signal sequence occupies residues 1–18; sequence MFLFAMGLLLVILQPSTG. At 19-476 the chain is on the lumenal, melanosome side; that stretch reads QFPRVCANTQ…YLKQAHQIWP (458 aa). N-linked (GlcNAc...) asparagine glycosylation is found at Asn-86, Asn-111, and Asn-161. Cu cation contacts are provided by His-180, His-202, and His-211. Asn-230 and Asn-290 each carry an N-linked (GlcNAc...) asparagine glycan. Residues 293 to 313 are disordered; the sequence is SEGPILRNPGNNDKSRTPRLP. Residues Asn-337 and Asn-356 are each glycosylated (N-linked (GlcNAc...) asparagine). Cu cation is bound by residues His-363 and His-367. N-linked (GlcNAc...) asparagine glycosylation is present at Asn-371. His-390 is a binding site for Cu cation. A helical transmembrane segment spans residues 477–497; sequence WLVGAAVIGGIITAVLSGLIL. The Cytoplasmic segment spans residues 498 to 529; that stretch reads ACRKKRKGTSPEIQPLLTESEDYNNVSYQSHF.

It belongs to the tyrosinase family. The cofactor is Cu(2+).

It localises to the melanosome membrane. The protein resides in the melanosome. The enzyme catalyses 2 L-dopa + O2 = 2 L-dopaquinone + 2 H2O. The catalysed reaction is L-tyrosine + O2 = L-dopaquinone + H2O. In terms of biological role, this is a copper-containing oxidase that functions in the formation of pigments such as melanins and other polyphenolic compounds. Catalyzes the initial and rate limiting step in the cascade of reactions leading to melanin production from tyrosine. In addition to hydroxylating tyrosine to DOPA (3,4-dihydroxyphenylalanine), also catalyzes the oxidation of DOPA to DOPA-quinone, and possibly the oxidation of DHI (5,6-dihydroxyindole) to indole-5,6 quinone. This is Tyrosinase (TYR) from Gallus gallus (Chicken).